Reading from the N-terminus, the 319-residue chain is Acetyl-coenzyme A carboxylase carboxyl transferase subunit alpha (319 aa).

The 262-residue stretch at Asn35–Asp296 folds into the CoA carboxyltransferase C-terminal domain.

This sequence belongs to the AccA family. Acetyl-CoA carboxylase is a heterohexamer composed of biotin carboxyl carrier protein (AccB), biotin carboxylase (AccC) and two subunits each of ACCase subunit alpha (AccA) and ACCase subunit beta (AccD).

Its subcellular location is the cytoplasm. The catalysed reaction is N(6)-carboxybiotinyl-L-lysyl-[protein] + acetyl-CoA = N(6)-biotinyl-L-lysyl-[protein] + malonyl-CoA. It participates in lipid metabolism; malonyl-CoA biosynthesis; malonyl-CoA from acetyl-CoA: step 1/1. Its function is as follows. Component of the acetyl coenzyme A carboxylase (ACC) complex. First, biotin carboxylase catalyzes the carboxylation of biotin on its carrier protein (BCCP) and then the CO(2) group is transferred by the carboxyltransferase to acetyl-CoA to form malonyl-CoA. In Klebsiella pneumoniae subsp. pneumoniae (strain ATCC 700721 / MGH 78578), this protein is Acetyl-coenzyme A carboxylase carboxyl transferase subunit alpha.